A 510-amino-acid polypeptide reads, in one-letter code: tRNA-2-methylthio-N(6)-dimethylallyladenosine synthase (510 aa).

The interval 1 to 25 (MSGFNDSPVPESAEKADGLLSQERG) is disordered. One can recognise an MTTase N-terminal domain in the interval 34-154 (RKLFVKSYGC…LPDLLRRVAH (121 aa)). Residues C43, C79, C117, C195, C199, and C202 each coordinate [4Fe-4S] cluster. The Radical SAM core domain maps to 181–414 (AERGVGAFVT…QALLEEQRQA (234 aa)). Residues 417–479 (KAMIGRVLPV…PNSFHGRLLA (63 aa)) form the TRAM domain. Residues 484 to 493 (QESAQGQESA) show a composition bias toward polar residues. Positions 484–510 (QESAQGQESAQGMERMEQNARAWEVPV) are disordered.

Belongs to the methylthiotransferase family. MiaB subfamily. Monomer. [4Fe-4S] cluster serves as cofactor.

The protein resides in the cytoplasm. The enzyme catalyses N(6)-dimethylallyladenosine(37) in tRNA + (sulfur carrier)-SH + AH2 + 2 S-adenosyl-L-methionine = 2-methylsulfanyl-N(6)-dimethylallyladenosine(37) in tRNA + (sulfur carrier)-H + 5'-deoxyadenosine + L-methionine + A + S-adenosyl-L-homocysteine + 2 H(+). In terms of biological role, catalyzes the methylthiolation of N6-(dimethylallyl)adenosine (i(6)A), leading to the formation of 2-methylthio-N6-(dimethylallyl)adenosine (ms(2)i(6)A) at position 37 in tRNAs that read codons beginning with uridine. The protein is tRNA-2-methylthio-N(6)-dimethylallyladenosine synthase of Beijerinckia indica subsp. indica (strain ATCC 9039 / DSM 1715 / NCIMB 8712).